A 240-amino-acid chain; its full sequence is Biotin--[acetyl-CoA-carboxylase] ligase (240 aa).

The BPL/LPL catalytic domain occupies 1-176; sequence MLARTDSTNA…AFARWQAQLD (176 aa). Biotin contacts are provided by residues 7 to 9, Gln-30, 34 to 36, and Lys-102; these read STN and RGR.

The protein belongs to the biotin--protein ligase family.

It catalyses the reaction biotin + L-lysyl-[protein] + ATP = N(6)-biotinyl-L-lysyl-[protein] + AMP + diphosphate + H(+). In terms of biological role, activates biotin to form biotinyl-5'-adenylate and transfers the biotin moiety to biotin-accepting proteins. This chain is Biotin--[acetyl-CoA-carboxylase] ligase (birA), found in Paracoccus denitrificans.